We begin with the raw amino-acid sequence, 289 residues long: Deleted in azoospermia-like (289 aa).

Positions 1–20 (MSANAEAQCGSISEDNTHSS) are disordered. The 82-residue stretch at 36-117 (NTVFVGGIDI…PAIRKQQNLC (82 aa)) folds into the RRM domain. The DAZ domain maps to 162–187 (TYAYSSPAVLIQQQVPVGYQPAYNYQ).

This sequence belongs to the RRM DAZ family.

The protein resides in the cytoplasm. Functionally, RNA-binding protein, which probably plays a central role in gametogenesis in both males and females. Acts by binding to the 3'-UTR of mRNA, specifically recognizing GUU triplets, and promoting the translation of key transcripts. The sequence is that of Deleted in azoospermia-like (DAZL) from Gallus gallus (Chicken).